A 217-amino-acid polypeptide reads, in one-letter code: N-(5'-phosphoribosyl)anthranilate isomerase (217 aa).

This sequence belongs to the TrpF family.

It catalyses the reaction N-(5-phospho-beta-D-ribosyl)anthranilate = 1-(2-carboxyphenylamino)-1-deoxy-D-ribulose 5-phosphate. It functions in the pathway amino-acid biosynthesis; L-tryptophan biosynthesis; L-tryptophan from chorismate: step 3/5. The protein is N-(5'-phosphoribosyl)anthranilate isomerase of Chlorobium luteolum (strain DSM 273 / BCRC 81028 / 2530) (Pelodictyon luteolum).